The chain runs to 224 residues: UPF0758 protein Psyr_0222 (224 aa).

The MPN domain maps to 102 to 224; it reads ALENPTQVRS…PLSMVERGLM (123 aa). Zn(2+) contacts are provided by histidine 173, histidine 175, and aspartate 186. The JAMM motif motif lies at 173–186; that stretch reads HNHPSGITTPSRSD.

The protein belongs to the UPF0758 family.

In Pseudomonas syringae pv. syringae (strain B728a), this protein is UPF0758 protein Psyr_0222.